The sequence spans 415 residues: MYEVRDINLWKEGERKIQWAKQHMPVLNLIRERFKEEKPFKGITIGMALHLEAKTAVLAETLMEGGAEIAITGCNPLSTQDDVAAACAKKGMHVYAWRGETVEEYYENLNKVLDHKPDIVIDDGCDLIFLLHTKRTELLDNIMGGCEETTTGIIRLKAMEKEGALKFPVMDVNDAYTKHLFDNRYGTGQSALDGILRATNLLIAGKTVVVAGYGWCGRGVAMRAKGLGAEVVVTEVNPIRALEARMDGFRVMKMEKAAEIGDIFITTTGCKDVIRKEHILKMRNGAILANAGHFDNEINKKHLEELAKSIKEVRNCVTEYDLGNKKIYLLGEGRLVNLACADGHPCEVMDMSFANQALAAEYILKNHEKLEPRVYNIPYEQDLMIASLKLKAMGIEIDELTKEQKKYLEDWREGT.

The substrate site is built by Asp123 and Glu148. NAD(+) is bound at residue Thr149–Thr151. 2 residues coordinate substrate: Lys178 and Asp182. Residues Asn183, Gly212–Gly217, Glu235, Ala291–His293, and Asn337 contribute to the NAD(+) site.

This sequence belongs to the adenosylhomocysteinase family. In terms of assembly, exists both as a homotetramer and a homodimer, in a 4:1 ratio. NAD(+) is required as a cofactor.

It localises to the cytoplasm. It catalyses the reaction S-inosyl-L-homocysteine + H2O = L-homocysteine + inosine. The protein operates within amino-acid biosynthesis; S-adenosyl-L-methionine biosynthesis. In terms of biological role, catalyzes the hydrolysis of S-inosyl-L-homocysteine (SIH) to L-homocysteine (Hcy) and inosine. Likely functions in a S-adenosyl-L-methionine (SAM) recycling pathway from S-adenosyl-L-homocysteine (SAH) produced from SAM-dependent methylation reactions. Can also catalyze the reverse reaction in vitro, i.e. the synthesis of SIH from Hcy and inosine. Is specific for SIH and inosine as it is unable to either hydrolyze SAH or synthesize SAH from adenosine and Hcy. In Methanocaldococcus jannaschii (strain ATCC 43067 / DSM 2661 / JAL-1 / JCM 10045 / NBRC 100440) (Methanococcus jannaschii), this protein is S-inosyl-L-homocysteine hydrolase.